The sequence spans 430 residues: Histidine--tRNA ligase (430 aa).

This sequence belongs to the class-II aminoacyl-tRNA synthetase family. In terms of assembly, homodimer.

The protein resides in the cytoplasm. It carries out the reaction tRNA(His) + L-histidine + ATP = L-histidyl-tRNA(His) + AMP + diphosphate + H(+). The polypeptide is Histidine--tRNA ligase (Parasynechococcus marenigrum (strain WH8102)).